The sequence spans 1265 residues: Kinesin-like protein Klp98A (1265 aa).

The region spanning 3 to 364 (SLKVAVRVRP…LRYANRAKNI (362 aa)) is the Kinesin motor domain. 100–107 (GQTGSGKT) contacts ATP. Disordered regions lie at residues 597-621 (GASP…DPEL), 828-864 (EAES…DVSK), and 884-954 (VSSP…CTPS). 2 coiled-coil regions span residues 619–670 (PELQ…EEMD) and 768–848 (AQFI…LGNK). Polar residues-rich tracts occupy residues 846-857 (GNKSMSTSTSTN), 884-901 (VSSP…SNCS), and 917-927 (SGSSEETSRTC). A compositionally biased stretch (gly residues) spans 933–946 (SGSGSGSVGIGGSG). Positions 1035–1071 (DLNKAQLDEHIADLQDLQRRYIQMEQEMLQSVQDLEA) form a coiled coil. Residues 1129–1259 (GEHFITIPSF…SFFKKGLFEN (131 aa)) form the PX domain.

Belongs to the TRAFAC class myosin-kinesin ATPase superfamily. Kinesin family. Interacts with Atg8a and Rab14.

It is found in the early endosome. Plus end-directed motor protein involved in asymmetric cell division of sensory organ precursor (SOP) cells by playing a role in the asymmetric localization of Sara-expressing endosomes to the pIIa daughter cell but not to the pIIb cell. Targets Sara-expressing endosomes to the central spindle which is symmetrically arranged in early cell division. During late cytokinesis, central spindle asymmetry is generated by enrichment of Patronin on the pIIb side which protects microtubules from depolymerization by Klp10A while unprotected microtubules on the pIIa side are disassembled by Klp10A, leading to the asymmetric delivery of Sara-expressing endosomes to the pIIa daughter cell. Also plays a role in regulation of autophagosome formation, fusion and positioning and is required for normal localization of Rab14. The polypeptide is Kinesin-like protein Klp98A (Drosophila melanogaster (Fruit fly)).